We begin with the raw amino-acid sequence, 579 residues long: MSAAIAALAASYGSGSGSESDSDSESSRCPLPAADSLMHLTKSPSSKPSLAVAVDSAPEVAVKEDLETGVHLDPAVKEVQYNPTYETMFAPEFGPENPFRTQQMAAPRNMLSGYAEPAHINDFMFEQQRRTFATYGYALDPSLDNHQVSAKYIGSVEEAEKNQGLTVFETGQKKTEKRKKFKENDASNIDGFLGPWAKYVDEKDVAKPSEEEQKELDEITAKRQKKGKQEEEKPGEEKTILHVKEMYDYQGRSYLHIPQDVGVNLRSTMPPEKCYLPKKQIHVWSGHTKGVSAVRLFPLSGHLLLSCSMDCKIKLWEVYGERRCLRTFIGHSKAVRDICFNTAGTQFLSAAYDRYLKLWDTETGQCISRFTNRKVPYCVKFNPDEDKQNLFVAGMSDKKIVQWDIRSGEIVQEYDRHLGAVNTIVFVDENRRFVSTSDDKSLRVWEWDIPVDFKYIAEPSMHSMPAVTLSPNGKWLACQSMDNQILIFGAQNRFRLNKKKIFKGHMVAGYACQVDFSPDMSYVISGDGNGKLNIWDWKTTKLYSRFKAHDKVCIGAVWHPHETSKVITCGWDGLIKLWD.

Low complexity predominate over residues 1–19 (MSAAIAALAASYGSGSGSE). Disordered regions lie at residues 1 to 47 (MSAA…PSSK) and 204 to 237 (DVAK…PGEE). Position 46 is a phosphoserine (serine 46). WD repeat units lie at residues 286-326 (GHTK…RCLR), 330-369 (GHSK…CISR), 371-413 (TNRK…IVQE), 416-455 (RHLG…DFKY), 459-498 (PSMH…RLNK), 504-545 (GHMV…LYSR), and 548-578 (AHDK…IKLW).

In terms of assembly, component of the pre-catalytic and catalytic spliceosome complexes. Component of the postcatalytic spliceosome P complex. Interacts with PPIL1; this interaction leads to CDC40 isomerization. In terms of processing, undergoes isomerization of the peptide bond between Gly-94 and Pro-95. The reaction is catalyzed by PPIL1.

It localises to the nucleus. The protein localises to the nucleus speckle. Its function is as follows. Required for pre-mRNA splicing as component of the activated spliceosome. Plays an important role in embryonic brain development; this function does not require proline isomerization. In Homo sapiens (Human), this protein is Pre-mRNA-processing factor 17 (CDC40).